Reading from the N-terminus, the 365-residue chain is Peptide chain release factor 2 (365 aa).

Residue Gln-252 is modified to N5-methylglutamine.

The protein belongs to the prokaryotic/mitochondrial release factor family. In terms of processing, methylated by PrmC. Methylation increases the termination efficiency of RF2.

The protein localises to the cytoplasm. In terms of biological role, peptide chain release factor 2 directs the termination of translation in response to the peptide chain termination codons UGA and UAA. The sequence is that of Peptide chain release factor 2 from Shewanella baltica (strain OS223).